The sequence spans 483 residues: Acetyl-coenzyme A carboxylase carboxyl transferase subunit beta, chloroplastic (483 aa).

The 265-residue stretch at 219-483 (LWVQCENCYG…LHTFFPLNQN (265 aa)) folds into the CoA carboxyltransferase N-terminal domain. 4 residues coordinate Zn(2+): Cys-223, Cys-226, Cys-242, and Cys-245. The C4-type zinc-finger motif lies at 223–245 (CENCYGLNYKKFFKSKMNLCEQC).

The protein belongs to the AccD/PCCB family. Acetyl-CoA carboxylase is a heterohexamer composed of biotin carboxyl carrier protein, biotin carboxylase and 2 subunits each of ACCase subunit alpha and ACCase plastid-coded subunit beta (accD). The cofactor is Zn(2+).

It is found in the plastid. The protein localises to the chloroplast stroma. It catalyses the reaction N(6)-carboxybiotinyl-L-lysyl-[protein] + acetyl-CoA = N(6)-biotinyl-L-lysyl-[protein] + malonyl-CoA. It functions in the pathway lipid metabolism; malonyl-CoA biosynthesis; malonyl-CoA from acetyl-CoA: step 1/1. In terms of biological role, component of the acetyl coenzyme A carboxylase (ACC) complex. Biotin carboxylase (BC) catalyzes the carboxylation of biotin on its carrier protein (BCCP) and then the CO(2) group is transferred by the transcarboxylase to acetyl-CoA to form malonyl-CoA. In Guizotia abyssinica (Niger), this protein is Acetyl-coenzyme A carboxylase carboxyl transferase subunit beta, chloroplastic.